The following is a 308-amino-acid chain: Acetaldehyde dehydrogenase 2 (308 aa).

An NAD(+)-binding site is contributed by 9–12 (SGNI). The active-site Acyl-thioester intermediate is Cys-127. NAD(+) contacts are provided by residues 158-166 (SAGPGTRAN) and Asn-286.

This sequence belongs to the acetaldehyde dehydrogenase family.

The catalysed reaction is acetaldehyde + NAD(+) + CoA = acetyl-CoA + NADH + H(+). This Parafrankia sp. (strain EAN1pec) protein is Acetaldehyde dehydrogenase 2.